We begin with the raw amino-acid sequence, 2217 residues long: DNA polymerase epsilon catalytic subunit A (2217 aa).

Cys2104, Cys2107, Cys2126, and Cys2129 together coordinate Zn(2+). A CysA-type zinc finger spans residues 2104 to 2129; sequence CEYCSYVSDLDLCRDGLDGKFQCPRC. Cys2160, Cys2163, Cys2175, and Cys2177 together coordinate [4Fe-4S] cluster. The CysB motif motif lies at 2160–2177; the sequence is CEKCHTVKRDLMSTNCNC.

It belongs to the DNA polymerase type-B family. As to quaternary structure, heterotetramer. Consists of 4 subunits: POL2, DPB2, DPB3 and DPB4. The cofactor is [4Fe-4S] cluster.

It localises to the nucleus. It carries out the reaction DNA(n) + a 2'-deoxyribonucleoside 5'-triphosphate = DNA(n+1) + diphosphate. Its function is as follows. DNA polymerase II participates in chromosomal DNA replication. In Candida glabrata (strain ATCC 2001 / BCRC 20586 / JCM 3761 / NBRC 0622 / NRRL Y-65 / CBS 138) (Yeast), this protein is DNA polymerase epsilon catalytic subunit A (POL2).